The following is a 540-amino-acid chain: Phosphoenolpyruvate carboxykinase (ATP) (540 aa).

Arg65 provides a ligand contact to substrate. Lys87 carries the post-translational modification N6-acetyllysine. Substrate-binding residues include Tyr207 and Lys213. ATP contacts are provided by residues Lys213, His232, and 248-256 (GLSGTGKTT). Lys213 and His232 together coordinate Mn(2+). Mn(2+) is bound at residue Asp269. Residues Glu297, Arg333, 449-450 (RI), and Thr455 each bind ATP. Arg333 contributes to the substrate binding site. Position 523 is an N6-acetyllysine (Lys523).

It belongs to the phosphoenolpyruvate carboxykinase (ATP) family. As to quaternary structure, monomer. Requires Mn(2+) as cofactor.

It localises to the cytoplasm. It carries out the reaction oxaloacetate + ATP = phosphoenolpyruvate + ADP + CO2. It functions in the pathway carbohydrate biosynthesis; gluconeogenesis. Its function is as follows. Involved in the gluconeogenesis. Catalyzes the conversion of oxaloacetate (OAA) to phosphoenolpyruvate (PEP) through direct phosphoryl transfer between the nucleoside triphosphate and OAA. This Escherichia fergusonii (strain ATCC 35469 / DSM 13698 / CCUG 18766 / IAM 14443 / JCM 21226 / LMG 7866 / NBRC 102419 / NCTC 12128 / CDC 0568-73) protein is Phosphoenolpyruvate carboxykinase (ATP).